Here is a 144-residue protein sequence, read N- to C-terminus: ASVTFWTLDNVDRTLVFTGNPGSAAIETITVGPAENTTVEFPGSWVGNWYAYPTDAEDVPGMLGEVQFGGWNGLTYFDVSAIVNPTDHDNVKQMWPAESRKPMSGCEVFPCDNAYWLPDDIQTKVTHEVDLWTTLGAGSTGLTF.

Residue Asn-36 is glycosylated (N-linked (GlcNAc...) asparagine). Residues 91–105 (VKQMWPAESRKPMSG) form an igE-binding epitope region.

In terms of assembly, homodimer. Mg(2+) is required as a cofactor.

The protein resides in the secreted. Functionally, has exodeoxyribonuclease activity with lambda-DNA and salmon testes dsDNA. No activity with circular plasmid DNA. The physiological role of this enzyme may be to degrade environmental DNA, and thus mobilize nitrogen for uptake. This Stachybotrys chartarum (Toxic black mold) protein is Antigenic protein SchS21.